Consider the following 706-residue polypeptide: Polyribonucleotide nucleotidyltransferase (706 aa).

2 residues coordinate Mg(2+): Asp-486 and Asp-492. Positions 553-612 (PRIHTIKISTDKIKDVIGKGGSVIRALTEETGTTIEIEDDGTVKIASTDGEKAKHAIRRI) constitute a KH domain. Positions 622–690 (GRVYQGKVTR…RQGRVRLSIK (69 aa)) constitute an S1 motif domain.

It belongs to the polyribonucleotide nucleotidyltransferase family. Component of the RNA degradosome, which is a multiprotein complex involved in RNA processing and mRNA degradation. It depends on Mg(2+) as a cofactor.

The protein localises to the cytoplasm. The enzyme catalyses RNA(n+1) + phosphate = RNA(n) + a ribonucleoside 5'-diphosphate. Functionally, involved in mRNA degradation. Catalyzes the phosphorolysis of single-stranded polyribonucleotides processively in the 3'- to 5'-direction. This chain is Polyribonucleotide nucleotidyltransferase, found in Pectobacterium carotovorum subsp. carotovorum (strain PC1).